The primary structure comprises 587 residues: Adenine deaminase (587 aa).

It belongs to the metallo-dependent hydrolases superfamily. Adenine deaminase family. Requires Mn(2+) as cofactor.

It carries out the reaction adenine + H2O + H(+) = hypoxanthine + NH4(+). This chain is Adenine deaminase, found in Shewanella halifaxensis (strain HAW-EB4).